Reading from the N-terminus, the 186-residue chain is ATP synthase subunit b 3 (186 aa).

The chain crosses the membrane as a helical span at residues 5 to 25 (LLPALLTFSATPALAAKGPFF).

This sequence belongs to the ATPase B chain family. In terms of assembly, F-type ATPases have 2 components, F(1) - the catalytic core - and F(0) - the membrane proton channel. F(1) has five subunits: alpha(3), beta(3), gamma(1), delta(1), epsilon(1). F(0) has three main subunits: a(1), b(2) and c(10-14). The alpha and beta chains form an alternating ring which encloses part of the gamma chain. F(1) is attached to F(0) by a central stalk formed by the gamma and epsilon chains, while a peripheral stalk is formed by the delta and b chains.

Its subcellular location is the cell inner membrane. F(1)F(0) ATP synthase produces ATP from ADP in the presence of a proton or sodium gradient. F-type ATPases consist of two structural domains, F(1) containing the extramembraneous catalytic core and F(0) containing the membrane proton channel, linked together by a central stalk and a peripheral stalk. During catalysis, ATP synthesis in the catalytic domain of F(1) is coupled via a rotary mechanism of the central stalk subunits to proton translocation. Functionally, component of the F(0) channel, it forms part of the peripheral stalk, linking F(1) to F(0). The protein is ATP synthase subunit b 3 of Dinoroseobacter shibae (strain DSM 16493 / NCIMB 14021 / DFL 12).